A 64-amino-acid chain; its full sequence is Conotoxin Ts-011 (64 aa).

The signal sequence occupies residues 1-22 (MHCLPVPVILLLLIASTPSVDA). Residues 23 to 51 (RPKTKDDVPPASFHGADNANRILRTLWNL) constitute a propeptide that is removed on maturation. Ile63 bears the Isoleucine amide mark.

The protein belongs to the conotoxin T superfamily. In terms of processing, contains 2 disulfide bonds that can be either 'C1-C3, C2-C4' or 'C1-C4, C2-C3', since these disulfide connectivities have been observed for conotoxins with cysteine framework V (for examples, see AC P0DQQ7 and AC P81755). As to expression, expressed by the venom duct.

It localises to the secreted. The protein is Conotoxin Ts-011 of Conus tessulatus (Tessellate cone).